The chain runs to 170 residues: Cyclic dof factor 4 (170 aa).

The disordered stretch occupies residues 25 to 51 (NEEETHPPEQEATIAVRSSSSSDLTAE). The Dof-type zinc-finger motif lies at 58 to 112 (IACPRCKSMETKFCYFNNYNVNQPRHFCKGCHRYWTAGGALRNVPVGAGRRKSKP). Positions 60, 63, 85, and 88 each coordinate Zn(2+).

As to expression, expressed in the vasculature of cotyledons and hypocotyls, leaves and roots.

The protein resides in the nucleus. Transcription factor that binds specifically to a 5'-AA[AG]G-3' consensus core sequence. Transcriptional repressor of 'CONSTANS' expression. Regulates a photoperiodic flowering response. The sequence is that of Cyclic dof factor 4 (CDF4) from Arabidopsis thaliana (Mouse-ear cress).